Reading from the N-terminus, the 162-residue chain is Ribosome maturation factor RimP (162 aa).

Belongs to the RimP family.

It localises to the cytoplasm. Its function is as follows. Required for maturation of 30S ribosomal subunits. The polypeptide is Ribosome maturation factor RimP (Ralstonia nicotianae (strain ATCC BAA-1114 / GMI1000) (Ralstonia solanacearum)).